Consider the following 536-residue polypeptide: Probable pectinesterase/pectinesterase inhibitor 59 (536 aa).

Positions Met-1–Ala-30 are cleaved as a signal peptide. The interval Asp-31–Val-183 is pectinesterase inhibitor 59. Residues Asn-33, Asn-91, Asn-116, Asn-159, and Asn-195 are each glycosylated (N-linked (GlcNAc...) asparagine). A pectinesterase 59 region spans residues Asn-221–Thr-522. Positions 298 and 328 each coordinate substrate. Asp-351 serves as the catalytic Proton donor; for pectinesterase activity. Residues Cys-365 and Cys-385 are joined by a disulfide bond. Asp-372 acts as the Nucleophile; for pectinesterase activity in catalysis. Residues Arg-440 and Trp-442 each contribute to the substrate site.

In the N-terminal section; belongs to the PMEI family. The protein in the C-terminal section; belongs to the pectinesterase family. Expressed in siliques.

It is found in the secreted. The protein localises to the cell wall. It catalyses the reaction [(1-&gt;4)-alpha-D-galacturonosyl methyl ester](n) + n H2O = [(1-&gt;4)-alpha-D-galacturonosyl](n) + n methanol + n H(+). Its pathway is glycan metabolism; pectin degradation; 2-dehydro-3-deoxy-D-gluconate from pectin: step 1/5. Functionally, acts in the modification of cell walls via demethylesterification of cell wall pectin. This Arabidopsis thaliana (Mouse-ear cress) protein is Probable pectinesterase/pectinesterase inhibitor 59 (PME59).